We begin with the raw amino-acid sequence, 270 residues long: Probable aquaporin NIP-type (270 aa).

2 helical membrane passes run 45 to 65 (LIAEAIGTYFVIFAGCGSVAV) and 72 to 92 (VTFPGICVTWGLIVMVMVYTV). Residues 101–103 (NPA) carry the NPA 1 motif. 3 consecutive transmembrane segments (helical) span residues 121-141 (LYIIAQLMGSILASGTLALLF), 160-180 (SLAIEIIISFLLMFVISGVAT), and 188-208 (VAGIAVGMTITLNVFVAGPIS). Residues 213 to 215 (NPA) carry the NPA 2 motif. A helical membrane pass occupies residues 231–251 (WVYVVGPIIGTLAGAFVYNLI).

The protein belongs to the MIP/aquaporin (TC 1.A.8) family. NIP (TC 1.A.8.12) subfamily. As to expression, pollen specific.

It is found in the membrane. Aquaporins facilitate the transport of water and small neutral solutes across cell membranes. The protein is Probable aquaporin NIP-type of Nicotiana alata (Winged tobacco).